A 75-amino-acid chain; its full sequence is Brevinin-2ISc (75 aa).

An N-terminal signal peptide occupies residues 1-22; it reads MFTLKKSLLLLFFLGTISLSLC. The propeptide at 23–40 is removed in mature form; it reads EEERDADEDEGEMTEEEV. A disulfide bond links C69 and C75.

As to expression, expressed by the skin glands.

It localises to the secreted. Functionally, has antimicrobial activity against Gram-negative bacterium E.coli ATCC 8739 (MIC=50 ug) and against Gram positive bacteria S.aureus ATCC 6538 (MIC=25 ug). Has no activity against methicillin-resistant S.aureus ATCC 43300, B.subtilis ATCC 6633 and against fungus C.albicans ATCC 90028. The chain is Brevinin-2ISc from Odorrana ishikawae (Ishikawa's frog).